The following is a 343-amino-acid chain: Transmembrane protein 120A (343 aa).

Residues 1-132 lie on the Cytoplasmic side of the membrane; sequence MQPPPPGPLG…KQAKFAYKDE (132 aa). A CoA-binding site is contributed by K130. The helical transmembrane segment at 133-152 threads the bilayer; sequence YEKFKLYLTIILILISFTCR. Topologically, residues 153–158 are extracellular; sequence FLLNSR. The helical transmembrane segment at 159 to 177 threads the bilayer; the sequence is VTDAAFNFLLVWYYCTLTI. The Cytoplasmic segment spans residues 178-190; sequence RESILINNGSRIK. CoA-binding residues include S187 and R188. The helical transmembrane segment at 191–209 threads the bilayer; the sequence is GWWVFHHYVSTFLSGVMLT. Over 210–218 the chain is Extracellular; the sequence is WPDGLMYQK. Residues 219-240 traverse the membrane as a helical segment; that stretch reads FRNQFLSFSMYQSFVQFLQYYY. Positions 237, 240, 241, and 283 each coordinate CoA. Topologically, residues 241–270 are cytoplasmic; that stretch reads QSGCLYRLRALGERHTMDLTVEGFQSWMWR. Residues 271 to 294 traverse the membrane as a helical segment; that stretch reads GLTFLLPFLFFGHFWQLFNALTLF. Over 295 to 304 the chain is Extracellular; sequence NLAQDPQCKE. The chain crosses the membrane as a helical span at residues 305–330; sequence WQVLMCGFPFLLLFLGNFFTTLRVVH. Residues 331-343 lie on the Cytoplasmic side of the membrane; sequence HKFHSQRHGSKKD. CoA is bound at residue K332.

This sequence belongs to the TMEM120 family. Homodimer. Forms heterooligomer with TMEM120B. Interacts with PKD2; TMEM120A inhibits PKD2 channel activity through the physical association of PKD2 with TMEM120A. Interacts (via C-terminal domain) with STING1; regulates the trafficking of STING1 from the ER to the ER-Golgi intermediate compartment to elicit antiviral effects. As to expression, expressed in nociceptors.

The protein localises to the cell membrane. The protein resides in the nucleus inner membrane. It localises to the endoplasmic reticulum. In terms of biological role, multifunctional protein involved in mechanosensation, and plays an essential role in lipid metabolism and adipocyte differentiation. May function as a potential ion channel involved in sensing mechanical stimuli. Mediates the mechanosensitivity of the PKD2-TMEM120A channel complex through direct physical interaction. TMEM120A seems to affect mechanosensation by inhibiting PIEZO2 channels, possibly by altering cellular lipid content. TMEM120A is structurally similar to a lipid-modifying enzyme, ELOVL7, and contains a bound coenzyme A molecule, which suggests it might function as an enzyme in lipid metabolism. Additionnaly, implicated in innate immune response against Zika virus. Acts as a key activator of the antiviral signaling involving STING1. In Homo sapiens (Human), this protein is Transmembrane protein 120A.